We begin with the raw amino-acid sequence, 346 residues long: MVKAYKQAGVDIEAGYQAVALMKQHVQKTMRPEVLGGIGGFGGLFDLSSLDYRQPVLVSGTDGVGTKLKLAFLLDRHNTIGIDCVAMCVNDIVVQGAEPLFFLDYIACGKAVPEKIAAIVKGVADGCVEAGCALIGGETAEMPGMYAEDEYDLAGFVVGIAEKERLVTGQTIQAGDVLIGLPSSGLHSNGYSLVRRIIFEQAKLSLDEIYEPLDVPLGEELLKPTRIYAKLLRSVLGRFTIKGMAHITGGGFIENIPRMLPQGLGVRIQRGSWPVLPIFDFLRAKGNLEEEEMFSVFNMGIGLVLAVSPETAAPLVQWLDEQNEPAYIIGEVVEGAGVSFTGGNEA.

It belongs to the AIR synthase family.

It is found in the cytoplasm. It catalyses the reaction 2-formamido-N(1)-(5-O-phospho-beta-D-ribosyl)acetamidine + ATP = 5-amino-1-(5-phospho-beta-D-ribosyl)imidazole + ADP + phosphate + H(+). Its pathway is purine metabolism; IMP biosynthesis via de novo pathway; 5-amino-1-(5-phospho-D-ribosyl)imidazole from N(2)-formyl-N(1)-(5-phospho-D-ribosyl)glycinamide: step 2/2. In Geobacillus thermodenitrificans (strain NG80-2), this protein is Phosphoribosylformylglycinamidine cyclo-ligase.